A 332-amino-acid polypeptide reads, in one-letter code: N-arachidonyl glycine receptor (332 aa).

Residues methionine 1 to leucine 26 are Extracellular-facing. The chain crosses the membrane as a helical span at residues valine 27 to phenylalanine 47. At serine 48–threonine 56 the chain is on the cytoplasmic side. Residues valine 57–phenylalanine 77 form a helical membrane-spanning segment. Residues arginine 78–arginine 95 lie on the Extracellular side of the membrane. A disulfide bond links cysteine 94 and cysteine 173. The helical transmembrane segment at isoleucine 96–serine 116 threads the bilayer. The Cytoplasmic segment spans residues alanine 117 to alanine 138. Residues valine 139–leucine 159 traverse the membrane as a helical segment. Residues tyrosine 160 to arginine 192 lie on the Extracellular side of the membrane. Residue asparagine 189 is glycosylated (N-linked (GlcNAc...) asparagine). The chain crosses the membrane as a helical span at residues leucine 193–histidine 213. At serine 214–arginine 233 the chain is on the cytoplasmic side. Residues isoleucine 234 to alanine 254 form a helical membrane-spanning segment. Topologically, residues phenylalanine 255 to glycine 269 are extracellular. The chain crosses the membrane as a helical span at residues alanine 270–valine 290. Over serine 291 to leucine 332 the chain is Cytoplasmic. A Phosphoserine modification is found at serine 323.

Belongs to the G-protein coupled receptor 1 family.

The protein localises to the cell membrane. Its subcellular location is the cytoplasmic vesicle membrane. In terms of biological role, g protein-coupled receptor (GPCR) that plays a role in diverse physiological processes particularly within the immune and nervous systems. Becomes active when triggered by various endogenous ligands including endocannabinoid N-arachidonyl glycine (NAGly), delta-9-tetrahydrocannabinol or resolvin D2/RvD2 derived from the omega-3 fatty acid docosahexaenoic acid (DHA). Upon RvD2 binding, facilitates the resolution of inflammation, aiding in tissue repair and homeostasis. Mechanistically, RvD2 ligation initiates Galphas protein coupling, activation of cAMP-PKA signaling pathway and phosphorylation of STAT3, leading to RvD2-stimulated macrophage phagocytosis. Mediates NAGly-induced process of reorganization of actin filaments and induction of acrosomal exocytosis. Activation by N-arachidonoyl glycine (NAGly) can also induce apoptosis in macrophages. Plays a role in homeostasis of CD8+ subsets of intraepithelial lymphocytes (IELs) (CD8alphaalpha and CD8alphabeta IELs) in small intestine by supporting preferential migration of CD8alphaalpha T-cells to intraepithelial compartment over lamina propria compartment, and by mediating their reconstitution into small intestine after bone marrow transplant. Participates also in hypotensive responses, mediating reduction in intraocular and blood pressure. This chain is N-arachidonyl glycine receptor (GPR18), found in Bos taurus (Bovine).